The chain runs to 200 residues: GSSPCRSVIMTAKAVGVELNKKLLNLQAGEHLKPEFLKINPQHTIPTLVDNGFALWESRAIQVYLVEKYGKTDSLYPKCPKKRAVINQRLYFDMGTLYQSFANYYYPQVFAKAPADPEAFKKIESAFEFLNTFLEGQEYAAGDSLTVADIALVASVSTFEVAGFEISKYANVNKWYENAKKVTPGWSENWAGCLEFKKFF.

The GST N-terminal domain maps to 1 to 73 (GSSPCRSVIM…YLVEKYGKTD (73 aa)). Glutathione is bound by residues Ser2, 43–45 (HTI), and 57–59 (ESR). The GST C-terminal domain maps to 79–200 (CPKKRAVINQ…AGCLEFKKFF (122 aa)).

It belongs to the GST superfamily. Theta family. In terms of assembly, homodimer.

It catalyses the reaction RX + glutathione = an S-substituted glutathione + a halide anion + H(+). The catalysed reaction is 1,1,1-trichloro-2,2-bis(4-chlorophenyl)ethane = 1,1-dichloro-2,2-bis(4-chlorophenyl)ethylene + chloride + H(+). Its function is as follows. Conjugation of reduced glutathione to a wide number of exogenous and endogenous hydrophobic electrophiles. Has DDT dehydrochlorinase activity. This is Glutathione S-transferase 1-1 (GstD1) from Drosophila mauritiana (Fruit fly).